Consider the following 267-residue polypeptide: Outer membrane protein assembly factor BamD (267 aa).

Positions 1 to 16 (MKKILLTVSLGLALSA) are cleaved as a signal peptide. A lipid anchor (N-palmitoyl cysteine) is attached at Cys-17. A lipid anchor (S-diacylglycerol cysteine) is attached at Cys-17.

This sequence belongs to the BamD family. In terms of assembly, part of the Bam complex.

It localises to the cell outer membrane. In terms of biological role, part of the outer membrane protein assembly complex, which is involved in assembly and insertion of beta-barrel proteins into the outer membrane. Required for efficient transformation of Neisseria meningitidis by species-related DNA. The protein is Outer membrane protein assembly factor BamD of Neisseria meningitidis serogroup A / serotype 4A (strain DSM 15465 / Z2491).